The chain runs to 394 residues: Elongation factor Tu (394 aa).

Positions 10-205 (KPHVNIGTIG…VDTWIPLPPR (196 aa)) constitute a tr-type G domain. The tract at residues 19–26 (GHVDHGKT) is G1. Residue 19-26 (GHVDHGKT) coordinates GTP. Residue Thr26 participates in Mg(2+) binding. Residues 60 to 64 (GITIN) form a G2 region. Residues 81 to 84 (DCPG) form a G3 region. Residues 81 to 85 (DCPGH) and 136 to 139 (NKCD) contribute to the GTP site. A G4 region spans residues 136 to 139 (NKCD). The interval 174 to 176 (SAL) is G5.

It belongs to the TRAFAC class translation factor GTPase superfamily. Classic translation factor GTPase family. EF-Tu/EF-1A subfamily. As to quaternary structure, monomer.

It localises to the cytoplasm. It carries out the reaction GTP + H2O = GDP + phosphate + H(+). Functionally, GTP hydrolase that promotes the GTP-dependent binding of aminoacyl-tRNA to the A-site of ribosomes during protein biosynthesis. The chain is Elongation factor Tu from Phocaeicola vulgatus (strain ATCC 8482 / DSM 1447 / JCM 5826 / CCUG 4940 / NBRC 14291 / NCTC 11154) (Bacteroides vulgatus).